A 262-amino-acid chain; its full sequence is Tetrahydromethanopterin S-methyltransferase subunit C (262 aa).

Transmembrane regions (helical) follow at residues 27-47, 72-92, 98-118, 145-165, 173-193, 200-220, and 222-242; these read LVGI…GGLL, PSIG…GVLI, LPVL…GFIV, ALAI…DIII, VIAL…NACI, KRTM…FAIA, and LDIV…GTFV.

It belongs to the MtrC family. In terms of assembly, the complex is composed of 8 subunits; MtrA, MtrB, MtrC, MtrD, MtrE, MtrF, MtrG and MtrH.

The protein resides in the cell membrane. The enzyme catalyses 5-methyl-5,6,7,8-tetrahydromethanopterin + coenzyme M + 2 Na(+)(in) = 5,6,7,8-tetrahydromethanopterin + methyl-coenzyme M + 2 Na(+)(out). The protein operates within one-carbon metabolism; methanogenesis from CO(2); methyl-coenzyme M from 5,10-methylene-5,6,7,8-tetrahydromethanopterin: step 2/2. Part of a complex that catalyzes the formation of methyl-coenzyme M and tetrahydromethanopterin from coenzyme M and methyl-tetrahydromethanopterin. This is an energy-conserving, sodium-ion translocating step. The protein is Tetrahydromethanopterin S-methyltransferase subunit C of Methanococcus maripaludis (strain C5 / ATCC BAA-1333).